The primary structure comprises 617 residues: Zinc metalloproteinase nas-36 (617 aa).

Positions 1 to 22 are cleaved as a signal peptide; the sequence is MRLCHSIILFNSLISISICSKA. The propeptide occupies 23–126; it reads DDPALLVASE…SKDKTKRLRR (104 aa). A Peptidase M12A domain is found at 127–322; the sequence is SFVSDKTATW…VATINTAYCK (196 aa). Disulfide bonds link C169–C321, C192–C211, C325–C346, C348–C357, C368–C397, C425–C445, C519–C550, C523–C555, and C535–C540. Residue N174 is glycosylated (N-linked (GlcNAc...) asparagine). Residue H219 coordinates Zn(2+). The active site involves E220. Residues H223 and H229 each contribute to the Zn(2+) site. The region spanning 317–358 is the EGF-like domain; it reads NTAYCKDECKSEKTKCENGGYMRPSKCSECLCPDGLGGEKCE. Residues 368-482 enclose the CUB domain; that stretch reads CGGIIKLTEE…IGFKIQAKST (115 aa). A TSP type-1 domain is found at 507 to 556; it reads PNVWADWGEWSMCSRTCGGCGIRSRVRSCRSKKCEGRRQEFGTCNLKACP.

The cofactor is Zn(2+). Expressed in hypodermal cells. Also detected in the hypodermal seam cells in L4 larvae and young adults. In old adult hermaphrodites, it localizes to the vulva (at protein level).

The protein localises to the secreted. In terms of biological role, metalloprotease. Involved in molting, a process during larval stages in which a new cuticle is formed and the old cuticle is shed. In Caenorhabditis elegans, this protein is Zinc metalloproteinase nas-36 (nas-36).